Consider the following 357-residue polypeptide: UDP-3-O-acylglucosamine N-acyltransferase (357 aa).

The Proton acceptor role is filled by H251.

The protein belongs to the transferase hexapeptide repeat family. LpxD subfamily. In terms of assembly, homotrimer.

It catalyses the reaction a UDP-3-O-[(3R)-3-hydroxyacyl]-alpha-D-glucosamine + a (3R)-hydroxyacyl-[ACP] = a UDP-2-N,3-O-bis[(3R)-3-hydroxyacyl]-alpha-D-glucosamine + holo-[ACP] + H(+). The protein operates within bacterial outer membrane biogenesis; LPS lipid A biosynthesis. In terms of biological role, catalyzes the N-acylation of UDP-3-O-acylglucosamine using 3-hydroxyacyl-ACP as the acyl donor. Is involved in the biosynthesis of lipid A, a phosphorylated glycolipid that anchors the lipopolysaccharide to the outer membrane of the cell. The polypeptide is UDP-3-O-acylglucosamine N-acyltransferase (Ralstonia pickettii (strain 12J)).